Reading from the N-terminus, the 266-residue chain is Protein YABBY 5 (266 aa).

A disordered region spans residues 1–22 (MMSSAPETFSLDHLSQHQQQQP). The C4-type zinc finger occupies 36–63 (CNFCDTILAVGVPCSSLFKTVTVRCGHC). Residues 119-141 (ASPNVSSITSSNSSCANNAPATS) show a composition bias toward low complexity. The segment at 119–174 (ASPNVSSITSSNSSCANNAPATSMASAANKATQREPQQPKNAPSANRTSEKRQRVP) is disordered. Positions 142–165 (MASAANKATQREPQQPKNAPSANR) are enriched in polar residues.

The protein belongs to the YABBY family.

It localises to the nucleus. In terms of biological role, may be involved in leaf cell growth and differentiation, rather than abaxial cell fate determination. The protein is Protein YABBY 5 (YAB5) of Oryza sativa subsp. indica (Rice).